A 284-amino-acid chain; its full sequence is MKVFILALLALAATTAIAQLETTCSQGFGQSQQQQQPGQRQLLEQMKPCVAFLQQKCGPLRMPFLQTQVEQLSSCQIVQYQCCQQLAQIPERTRCHAIHIVVEAIIQQQSQQQWQEPQQQAQHKSMRMLLENLSLMCNIYVPVQCQQQQQLGQQQQQQLQEQLTPCTTFLQQQCSPVTVPFPQIPVDQPTSCQNVQHQCCRQLSQIPEQFRCQAIHNVAEAIRQQQPQQQWQGMYQPQQPAQLESIRMSLQALRSMCSIYIPVQCPAPTTYNIPLVATYTGGAC.

An N-terminal signal peptide occupies residues 1–18 (MKVFILALLALAATTAIA).

It belongs to the prolamin family. Contains disulfide bonds.

In terms of biological role, seed storage protein. Might be integrated via inter-chain disulfide bonds within the glutenin polymer. This is Avenin-like b8 from Triticum aestivum (Wheat).